The sequence spans 535 residues: Alpha-1,3-mannosyl-glycoprotein 4-beta-N-acetylglucosaminyltransferase A (535 aa).

Over 1 to 6 (MRLRNG) the chain is Cytoplasmic. The helical; Signal-anchor for type II membrane protein transmembrane segment at 7-27 (TVATVLVFITTFLSLSWYTAW) threads the bilayer. Residues 28–54 (QNGKEKLIAYQREFHALKERLRIAEHR) are a coiled coil. Over 28–535 (QNGKEKLIAY…NEIHIKKMTN (508 aa)) the chain is Lumenal. Residues Asn77, Asn85, and Asn458 are each glycosylated (N-linked (GlcNAc...) asparagine).

Belongs to the glycosyltransferase 54 family. A divalent metal cation serves as cofactor. In terms of processing, N-glycosylated.

It is found in the golgi apparatus membrane. Its subcellular location is the secreted. The enzyme catalyses N(4)-{beta-D-GlcNAc-(1-&gt;2)-alpha-D-Man-(1-&gt;3)-[beta-D-GlcNAc-(1-&gt;2)-alpha-D-Man-(1-&gt;6)]-beta-D-Man-(1-&gt;4)-beta-D-GlcNAc-(1-&gt;4)-beta-D-GlcNAc}-L-asparaginyl-[protein] + UDP-N-acetyl-alpha-D-glucosamine = N(4)-{beta-D-GlcNAc-(1-&gt;2)-[beta-D-GlcNAc-(1-&gt;4)]-alpha-D-Man-(1-&gt;3)-[beta-D-GlcNAc-(1-&gt;2)-alpha-D-Man-(1-&gt;6)]-beta-D-Man-(1-&gt;4)-beta-D-GlcNAc-(1-&gt;4)-beta-D-GlcNAc}-L-asparaginyl-[protein] + UDP + H(+). It catalyses the reaction an N(4)-{beta-D-GlcNAc-(1-&gt;2)-alpha-D-Man-(1-&gt;3)-[alpha-D-Man-(1-&gt;6)]-beta-D-Man-(1-&gt;4)-beta-D-GlcNAc-(1-&gt;4)-beta-D-GlcNAc}-L-asparaginyl-[protein] + UDP-N-acetyl-alpha-D-glucosamine = an N(4)-{beta-D-GlcNAc-(1-&gt;2)-[beta-D-GlcNAc-(1-&gt;4)]-alpha-D-Man-(1-&gt;3)-[alpha-D-Man-(1-&gt;6)]-beta-D-Man-(1-&gt;4)-beta-D-GlcNAc-(1-&gt;4)-beta-D-GlcNAc}-L-asparaginyl-[protein] + UDP + H(+). The catalysed reaction is an N(4)-{beta-D-GlcNAc-(1-&gt;2)-alpha-D-Man-(1-&gt;3)-[beta-D-GlcNAc-(1-&gt;2)-[beta-D-GlcNAc-(1-&gt;6)]-alpha-D-Man-(1-&gt;6)]-beta-D-Man-(1-&gt;4)-beta-D-GlcNAc-(1-&gt;4)-beta-D-GlcNAc}-L-asparaginyl-[protein] + UDP-N-acetyl-alpha-D-glucosamine = an N(4)-{beta-D-GlcNAc-(1-&gt;2)-[beta-D-GlcNAc-(1-&gt;4)]-alpha-D-Man-(1-&gt;3)-[beta-D-GlcNAc-(1-&gt;2)-[beta-D-GlcNAc-(1-&gt;6)]-alpha-D-Man-(1-&gt;6)]-beta-D-Man-(1-&gt;4)-beta-D-GlcNAc-(1-&gt;4)-beta-D-GlcNAc}-L-asparaginyl-[protein] + UDP + H(+). It carries out the reaction an N(4)-{beta-D-GlcNAc-(1-&gt;2)-alpha-D-Man-(1-&gt;3)-[beta-D-GlcNAc-(1-&gt;2)-alpha-D-Man-(1-&gt;6)]-beta-D-Man-(1-&gt;4)-beta-D-GlcNAc-(1-&gt;4)-[alpha-L-Fuc-(1-&gt;6)]-beta-D-GlcNAc}-L-asparaginyl-[protein] + UDP-N-acetyl-alpha-D-glucosamine = N(4)-{beta-D-GlcNAc-(1-&gt;2)-[beta-D-GlcNAc-(1-&gt;4)]-alpha-D-Man-(1-&gt;3)-[beta-D-GlcNAc-(1-&gt;2)-alpha-D-Man-(1-&gt;6)]-beta-D-Man-(1-&gt;4)-beta-D-GlcNAc-(1-&gt;4)-[alpha-L-Fuc-(1-&gt;6)]-beta-D-GlcNAc}-asparaginyl-[protein] + UDP + H(+). The enzyme catalyses an N(4)-{beta-D-GlcNAc-(1-&gt;2)-alpha-D-Man-(1-&gt;3)-[beta-D-Gal-(1-&gt;4)-beta-D-GlcNAc-(1-&gt;2)-alpha-D-Man-(1-&gt;6)]-beta-D-Man-(1-&gt;4)-beta-D-GlcNAc-(1-&gt;4)-beta-D-GlcNAc}-L-asparaginyl-[protein] + UDP-N-acetyl-alpha-D-glucosamine = an N(4)-{beta-D-GlcNAc-(1-&gt;2)-[beta-D-GlcNAc-(1-&gt;4)]-alpha-D-Man-(1-&gt;3)-[beta-D-Gal-(1-&gt;4)-beta-D-GlcNAc-(1-&gt;2)-alpha-D-Man-(1-&gt;6)]-beta-D-Man-(1-&gt;4)-beta-D-GlcNAc-(1-&gt;4)-beta-D-GlcNAc}-L-asparaginyl-[protein] + UDP + H(+). It catalyses the reaction N(4)-{beta-D-GlcNAc-(1-&gt;2)-alpha-D-Man-(1-&gt;3)-[alpha-D-Man-(1-&gt;3)-{alpha-D-Man-(1-&gt;6)}-alpha-D-Man-(1-&gt;6)]-beta-D-Man-(1-&gt;4)-beta-D-GlcNAc-(1-&gt;4)-beta-D-GlcNAc}-asparaginyl-[protein] + UDP-N-acetyl-alpha-D-glucosamine = N(4)-{beta-D-GlcNAc-(1-&gt;2)-[beta-D-GlcNAc-(1-&gt;4)]-alpha-D-Man-(1-&gt;3)-[alpha-D-Man-(1-&gt;3)-{alpha-D-Man-(1-&gt;6)}-alpha-D-Man-(1-&gt;6)]-beta-D-Man-(1-&gt;4)-beta-D-GlcNAc-(1-&gt;4)-beta-D-GlcNAc}-asparaginyl-[protein] + UDP + H(+). The catalysed reaction is N(4)-{beta-D-GlcNAc-(1-&gt;2)-alpha-D-Man-(1-&gt;3)-beta-D-Man-(1-&gt;4)-beta-D-GlcNAc-(1-&gt;4)-beta-D-GlcNAc}-asparaginyl-[protein] + UDP-N-acetyl-alpha-D-glucosamine = N(4)-{beta-D-GlcNAc-(1-&gt;2)-[beta-D-GlcNAc-(1-&gt;4)]-alpha-D-Man-(1-&gt;3)-beta-D-Man-(1-&gt;4)-beta-D-GlcNAc-(1-&gt;4)-beta-D-GlcNAc}-asparaginyl-[protein] + UDP + H(+). It participates in protein modification; protein glycosylation. Its activity is regulated as follows. Inhibited by UDP. Glycosyltransferase that catalyze the transfer of GlcNAc from UDP-GlcNAc to the GlcNAcbeta1-2Manalpha1-3 arm of the core structure of N-linked glycans through a beta1-4 linkage and participates in the production of tri- and tetra-antennary N-linked sugar chains. Involved in glucose transport by mediating SLC2A2/GLUT2 glycosylation, thereby controlling cell-surface expression of SLC2A2 in pancreatic beta cells. In Gallus gallus (Chicken), this protein is Alpha-1,3-mannosyl-glycoprotein 4-beta-N-acetylglucosaminyltransferase A.